Consider the following 605-residue polypeptide: DNA mismatch repair protein MutL (605 aa).

It belongs to the DNA mismatch repair MutL/HexB family.

In terms of biological role, this protein is involved in the repair of mismatches in DNA. It is required for dam-dependent methyl-directed DNA mismatch repair. May act as a 'molecular matchmaker', a protein that promotes the formation of a stable complex between two or more DNA-binding proteins in an ATP-dependent manner without itself being part of a final effector complex. This Rhizobium meliloti (strain 1021) (Ensifer meliloti) protein is DNA mismatch repair protein MutL.